We begin with the raw amino-acid sequence, 179 residues long: Large ribosomal subunit protein uL10 (179 aa).

The protein belongs to the universal ribosomal protein uL10 family. Part of the ribosomal stalk of the 50S ribosomal subunit. The N-terminus interacts with L11 and the large rRNA to form the base of the stalk. The C-terminus forms an elongated spine to which L12 dimers bind in a sequential fashion forming a multimeric L10(L12)X complex.

In terms of biological role, forms part of the ribosomal stalk, playing a central role in the interaction of the ribosome with GTP-bound translation factors. This Symbiobacterium thermophilum (strain DSM 24528 / JCM 14929 / IAM 14863 / T) protein is Large ribosomal subunit protein uL10.